We begin with the raw amino-acid sequence, 125 residues long: Ribonuclease pancreatic (125 aa).

2 residues coordinate substrate: K7 and R10. H12 acts as the Proton acceptor in catalysis. Intrachain disulfides connect C27–C85, C41–C96, C59–C111, and C66–C73. N35 carries N-linked (GlcNAc...) asparagine glycosylation. Substrate is bound by residues 42 to 46, K67, and R86; that span reads KPVNT. The active-site Proton donor is H120.

The protein belongs to the pancreatic ribonuclease family. In terms of assembly, monomer. Interacts with and forms tight 1:1 complexes with RNH1. Dimerization of two such complexes may occur. Interaction with RNH1 inhibits this protein. In terms of tissue distribution, pancreas.

Its subcellular location is the secreted. The enzyme catalyses an [RNA] containing cytidine + H2O = an [RNA]-3'-cytidine-3'-phosphate + a 5'-hydroxy-ribonucleotide-3'-[RNA].. It catalyses the reaction an [RNA] containing uridine + H2O = an [RNA]-3'-uridine-3'-phosphate + a 5'-hydroxy-ribonucleotide-3'-[RNA].. Endonuclease that catalyzes the cleavage of RNA on the 3' side of pyrimidine nucleotides. Acts on single-stranded and double-stranded RNA. This Spalax ehrenbergi (Middle East blind mole rat) protein is Ribonuclease pancreatic (RNASE1).